A 154-amino-acid chain; its full sequence is 6,7-dimethyl-8-ribityllumazine synthase (154 aa).

5-amino-6-(D-ribitylamino)uracil-binding positions include Phe-22, 56-58 (AFE), and 80-82 (AVI). Residue 85–86 (AT) participates in (2S)-2-hydroxy-3-oxobutyl phosphate binding. The Proton donor role is filled by His-88. Phe-113 lines the 5-amino-6-(D-ribitylamino)uracil pocket. Arg-127 is a binding site for (2S)-2-hydroxy-3-oxobutyl phosphate.

It belongs to the DMRL synthase family.

The enzyme catalyses (2S)-2-hydroxy-3-oxobutyl phosphate + 5-amino-6-(D-ribitylamino)uracil = 6,7-dimethyl-8-(1-D-ribityl)lumazine + phosphate + 2 H2O + H(+). It functions in the pathway cofactor biosynthesis; riboflavin biosynthesis; riboflavin from 2-hydroxy-3-oxobutyl phosphate and 5-amino-6-(D-ribitylamino)uracil: step 1/2. Its function is as follows. Catalyzes the formation of 6,7-dimethyl-8-ribityllumazine by condensation of 5-amino-6-(D-ribitylamino)uracil with 3,4-dihydroxy-2-butanone 4-phosphate. This is the penultimate step in the biosynthesis of riboflavin. This chain is 6,7-dimethyl-8-ribityllumazine synthase, found in Desulfitobacterium hafniense (strain DSM 10664 / DCB-2).